A 573-amino-acid chain; its full sequence is 60 kDa heat shock protein, mitochondrial (573 aa).

Residues 1–26 (MLRLPTVFRQMRPVSRVLAPHLTRAY) constitute a mitochondrion transit peptide. N6-succinyllysine is present on Lys-31. 2 positions are modified to phosphoserine: Ser-67 and Ser-70. Position 75 (Lys-75) interacts with ATP. N6-acetyllysine is present on Lys-75. Lys-82 carries the N6-acetyllysine; alternate modification. Residue Lys-82 is modified to N6-succinyllysine; alternate. N6-acetyllysine is present on Lys-87. Residue Tyr-90 is modified to Phosphotyrosine. Lys-91 carries the N6-acetyllysine modification. 111–115 (DGTTT) provides a ligand contact to ATP. The residue at position 125 (Lys-125) is an N6-acetyllysine; alternate. Lys-125 carries the N6-succinyllysine; alternate modification. Lys-130 is subject to N6-acetyllysine. An N6-acetyllysine; alternate modification is found at Lys-133. At Lys-133 the chain carries N6-succinyllysine; alternate. Lys-133 bears the N6-malonyllysine; alternate mark. Lys-156 is subject to N6-acetyllysine. 5 positions are modified to N6-acetyllysine; alternate: Lys-191, Lys-202, Lys-205, Lys-218, and Lys-236. Lys-191, Lys-202, Lys-205, Lys-218, and Lys-236 each carry N6-succinyllysine; alternate. Position 249 is an N6-acetyllysine (Lys-249). The residue at position 250 (Lys-250) is an N6-acetyllysine; alternate. Lys-250 carries the post-translational modification N6-succinyllysine; alternate. N6-acetyllysine is present on residues Lys-269 and Lys-292. At Lys-301 the chain carries N6-succinyllysine. Residue Lys-314 is modified to N6-acetyllysine. Position 352 is an N6-acetyllysine; alternate (Lys-352). Lys-352 carries the N6-succinyllysine; alternate modification. Lys-359 and Lys-389 each carry N6-acetyllysine. Position 396 is an N6-acetyllysine; alternate (Lys-396). Lys-396 bears the N6-succinyllysine; alternate mark. Ser-410 carries the phosphoserine modification. ATP is bound at residue Gly-440. Lys-469 carries the N6-acetyllysine modification. Lys-481 carries the post-translational modification N6-acetyllysine; alternate. The residue at position 481 (Lys-481) is an N6-succinyllysine; alternate. Ser-488 carries the phosphoserine modification. Position 520 (Asp-520) interacts with ATP. Lys-551 participates in a covalent cross-link: Glycyl lysine isopeptide (Lys-Gly) (interchain with G-Cter in SUMO2).

The protein belongs to the chaperonin (HSP60) family. Homoheptamer arranged in a ring structure. The functional units of these chaperonins consist of heptameric rings of the large subunit Hsp60, which function as a back-to-back double ring. Interacts with 2 heptameric Hsp10 rings to form the symmetrical football complex. Interacts with HRAS. Interacts with ATAD3A. Interacts with ETFBKMT and EEF1AKMT3. Interacts with MFHAS1. In terms of assembly, (Microbial infection) Interacts with hepatitis B virus/HBV protein X. As to quaternary structure, (Microbial infection) Interacts with HTLV-1 protein p40tax.

Its subcellular location is the mitochondrion matrix. The enzyme catalyses ATP + H2O + a folded polypeptide = ADP + phosphate + an unfolded polypeptide.. Its function is as follows. Chaperonin implicated in mitochondrial protein import and macromolecular assembly. Together with Hsp10, facilitates the correct folding of imported proteins. May also prevent misfolding and promote the refolding and proper assembly of unfolded polypeptides generated under stress conditions in the mitochondrial matrix. The functional units of these chaperonins consist of heptameric rings of the large subunit Hsp60, which function as a back-to-back double ring. In a cyclic reaction, Hsp60 ring complexes bind one unfolded substrate protein per ring, followed by the binding of ATP and association with 2 heptameric rings of the co-chaperonin Hsp10. This leads to sequestration of the substrate protein in the inner cavity of Hsp60 where, for a certain period of time, it can fold undisturbed by other cell components. Synchronous hydrolysis of ATP in all Hsp60 subunits results in the dissociation of the chaperonin rings and the release of ADP and the folded substrate protein. This Homo sapiens (Human) protein is 60 kDa heat shock protein, mitochondrial (HSPD1).